The sequence spans 88 residues: UPF0250 protein SO_1163 (88 aa).

This sequence belongs to the UPF0250 family.

The sequence is that of UPF0250 protein SO_1163 from Shewanella oneidensis (strain ATCC 700550 / JCM 31522 / CIP 106686 / LMG 19005 / NCIMB 14063 / MR-1).